We begin with the raw amino-acid sequence, 360 residues long: Histidinol-phosphate aminotransferase (360 aa).

N6-(pyridoxal phosphate)lysine is present on lysine 224.

This sequence belongs to the class-II pyridoxal-phosphate-dependent aminotransferase family. Histidinol-phosphate aminotransferase subfamily. It depends on pyridoxal 5'-phosphate as a cofactor.

The catalysed reaction is L-histidinol phosphate + 2-oxoglutarate = 3-(imidazol-4-yl)-2-oxopropyl phosphate + L-glutamate. Its pathway is amino-acid biosynthesis; L-histidine biosynthesis; L-histidine from 5-phospho-alpha-D-ribose 1-diphosphate: step 7/9. The protein is Histidinol-phosphate aminotransferase of Methanococcoides burtonii (strain DSM 6242 / NBRC 107633 / OCM 468 / ACE-M).